The primary structure comprises 215 residues: MIYLNNVILNDKTLPMCFNLSVNAGERVAIIGESGAGKSTLLNLIAGFEFPAQGEIWLNDKNHTRSAPYERPVSMLFQENNLFPHLTVQQNLALGIKPSLKLTALEQEKIEQVACSVGLGDYLERLPNSLSGGQKQRVALARCLLRDKPILLLDEPFSALDQKLRVEMLALIAKLCDEKDLTLLLVTHQPSELIGSIDQVLVVENGQISQLQKGV.

The 214-residue stretch at 2–215 (IYLNNVILND…GQISQLQKGV (214 aa)) folds into the ABC transporter domain. Residue 32–39 (GESGAGKS) participates in ATP binding.

It belongs to the ABC transporter superfamily. Thiamine importer (TC 3.A.1.19.1) family. As to quaternary structure, the complex is composed of two ATP-binding proteins (ThiQ), two transmembrane proteins (ThiP) and a solute-binding protein (ThiB).

It is found in the cell inner membrane. The catalysed reaction is thiamine(out) + ATP + H2O = thiamine(in) + ADP + phosphate + H(+). Functionally, part of the ABC transporter complex ThiBPQ involved in thiamine import. Responsible for energy coupling to the transport system. This Haemophilus influenzae (strain ATCC 51907 / DSM 11121 / KW20 / Rd) protein is Thiamine import ATP-binding protein ThiQ.